The sequence spans 95 residues: Small ubiquitin-related modifier 2 (95 aa).

A Peptide (Met-Gly) (interchain with G-Cter in ubiquitin) cross-link involves residue M1. Residues K5 and K7 each participate in a glycyl lysine isopeptide (Lys-Gly) (interchain with G-Cter in SUMO2) cross-link. Position 11 is an N6-acetyllysine; alternate (K11). K11 is covalently cross-linked (Glycyl lysine isopeptide (Lys-Gly) (interchain with G-Cter in SUMO); alternate). A Glycyl lysine isopeptide (Lys-Gly) (interchain with G-Cter in SUMO1); alternate cross-link involves residue K11. K11 is covalently cross-linked (Glycyl lysine isopeptide (Lys-Gly) (interchain with G-Cter in SUMO2); alternate). K11 participates in a covalent cross-link: Glycyl lysine isopeptide (Lys-Gly) (interchain with G-Cter in ubiquitin); alternate. Positions 16–95 (DHINLKVAGQ…VFQQQTGGVY (80 aa)) constitute a Ubiquitin-like domain. Residue K21 forms a Glycyl lysine isopeptide (Lys-Gly) (interchain with G-Cter in SUMO2) linkage. G93 is covalently cross-linked (Glycyl lysine isopeptide (Gly-Lys) (interchain with K-? in acceptor proteins)). The propeptide occupies 94–95 (VY).

It belongs to the ubiquitin family. SUMO subfamily. In terms of assembly, interacts with SAE2 and UBE2I. Interacts with ZNF451. Identified in a complex with ZNF451 and UBE2I/UBC9, where one ZNF451 interacts with one UBE2I/UBC9 and two SUMO2 chains, one bound to the UBE2I/UBC9 active site and the other to another region of the same UBE2I/UBC9 molecule. Covalently attached to a number of proteins. Interacts with PELP1. Interacts with USP25; the interaction sumoylates USP25. Interacts with SIMC1, CASP8AP2, RNF111 and SOBP (via SIM domains). Interacts with MTA1. Interacts with HINT1. Interacts with GCNA (via SIM domains); this interaction allows the GCNA recruitment to DPCs sites. Post-translationally, polymeric chains can be formed through Lys-11 cross-linking. Polymeric SUMO2 chains undergo 'Lys-6'-, 'Lys-11'-, 'Lys-48'- and 'Lys-63'-linked polyubiquitination by RNF4. Cleavage of precursor form by SENP1 or SENP2 is necessary for function. In terms of processing, monoubiquitinated N-terminally by UBE2W, which primes it for RNF4-dependent polyubiquitination by the UBE2V1-UBE2N heterodimer.

Its subcellular location is the nucleus. The protein localises to the PML body. Functionally, ubiquitin-like protein that can be covalently attached to proteins as a monomer or as a lysine-linked polymer. Covalent attachment via an isopeptide bond to its substrates requires prior activation by the E1 complex SAE1-SAE2 and linkage to the E2 enzyme UBE2I, and can be promoted by an E3 ligase such as PIAS1-4, RANBP2 or CBX4. This post-translational modification on lysine residues of proteins plays a crucial role in a number of cellular processes such as nuclear transport, DNA replication and repair, mitosis and signal transduction. Polymeric SUMO2 chains are also susceptible to polyubiquitination which functions as a signal for proteasomal degradation of modified proteins. Plays a role in the regulation of sumoylation status of SETX. This chain is Small ubiquitin-related modifier 2, found in Bos taurus (Bovine).